A 300-amino-acid polypeptide reads, in one-letter code: GTP-binding protein At2g22870 (300 aa).

The EngB-type G domain maps to 119–297 (DRPEIAILGR…LLHMSQLRNY (179 aa)). Residues 127-134 (GRSNVGKS), 154-158 (GKTQL), 172-175 (DLPG), 239-242 (TKCD), and 276-278 (TSS) each bind GTP. Residues Ser134 and Thr156 each coordinate Mg(2+).

The protein belongs to the TRAFAC class TrmE-Era-EngA-EngB-Septin-like GTPase superfamily. EngB GTPase family. It depends on Mg(2+) as a cofactor.

This chain is GTP-binding protein At2g22870 (EMB2001), found in Arabidopsis thaliana (Mouse-ear cress).